The sequence spans 124 residues: UPF0102 protein Blon_1698/BLIJ_1758 (124 aa).

It belongs to the UPF0102 family.

In Bifidobacterium longum subsp. infantis (strain ATCC 15697 / DSM 20088 / JCM 1222 / NCTC 11817 / S12), this protein is UPF0102 protein Blon_1698/BLIJ_1758.